Consider the following 249-residue polypeptide: Pleckstrin homology domain-containing family F member 2 (249 aa).

Position 16 is a phosphoserine (Ser16). A PH domain is found at 35–131 (VLIGEGVLTK…WMNHINKCVT (97 aa)). Lys44 carries the N6-acetyllysine modification. Residues 152–212 (DSEATVCMRC…ICDFCYDLLS (61 aa)) form an FYVE-type zinc finger. Cys158, Cys161, Cys175, Cys178, Cys183, Cys186, Cys204, and Cys207 together coordinate Zn(2+). Polar residues predominate over residues 221 to 233 (PARSDSYSQSLKS). A disordered region spans residues 221 to 249 (PARSDSYSQSLKSPLNDMSDDDDDDDSSD). Acidic residues predominate over residues 238-249 (MSDDDDDDDSSD). Phosphoserine occurs at positions 239 and 248.

As to quaternary structure, may interact with EEA1. Expressed in placenta, ovary and small intestine, as well as in heart and pancreas. Also expressed in peripheral blood mononuclear cells and dendritic cells.

Its subcellular location is the early endosome membrane. It is found in the endoplasmic reticulum. Its function is as follows. May play a role in early endosome fusion upstream of RAB5, hence regulating receptor trafficking and fluid-phase transport. Enhances cellular sensitivity to TNF-induced apoptosis. The protein is Pleckstrin homology domain-containing family F member 2 (PLEKHF2) of Homo sapiens (Human).